The following is an 86-amino-acid chain: Beta-mammal/insect toxin To1 (86 aa).

The first 20 residues, 1-20 (MTRFVLFISCFFLIDMIVEC), serve as a signal peptide directing secretion. One can recognise an LCN-type CS-alpha/beta domain in the interval 22 to 84 (KEGYLVGNDG…TWSSATNKCK (63 aa)). 4 disulfide bridges follow: cysteine 32–cysteine 83, cysteine 36–cysteine 58, cysteine 44–cysteine 64, and cysteine 48–cysteine 66. Lysine 84 is subject to Lysine amide.

Belongs to the long (4 C-C) scorpion toxin superfamily. Sodium channel inhibitor family. Beta subfamily. In terms of tissue distribution, expressed by the venom gland.

The protein resides in the secreted. Functionally, beta toxin that show multiple effects. It enhances the open probability at more negative potentials of human Nav1.3/SCN3A and Nav1.6/SCN8A, of the insect channel BgNaV1 and of arachnid VdNaV1 channel. It promotes an important shift in slow inactivation processes as a function of the prepulse voltage in human Nav1.3/SCN3A and Nav1.6/SCN8A and a small shift in Nav1.1/SCN1A, Nav1.2/SCN2A and Nav1.4/SCN4A. Finally, it reduces the peak of sodium currents in Nav1.3/SCN3A (80% inhibition at 70 nM of toxin), Nav1.6/SCN8A (55.3%), Nav1.1/SCN1A (53.3%), Nav1.5/SCN5A (46.7%), Nav1.2/SCN2A (42.7%) and Nav1.4/SCN4A (20%) voltage-gated sodium channels. It has also been shown to affect the sodium current permeability of rat cerebellum granular cells in a partially reversible manner. In vivo, an intraperitoneal injection (20 ug) into mice produces excitability, respiratory problems, convulsions and death, within the first 30 minutes after injection. In Tityus obscurus (Amazonian scorpion), this protein is Beta-mammal/insect toxin To1.